Here is a 372-residue protein sequence, read N- to C-terminus: Fatty acid 2-hydroxylase (372 aa).

Positions 8-86 (AASFTPAEVQ…LEQYYVGELR (79 aa)) constitute a Cytochrome b5 heme-binding domain. His-43 and His-69 together coordinate heme. 2 consecutive transmembrane segments (helical) span residues 168-188 (VWYS…WSYY) and 213-233 (SVFI…EYVI). The Fatty acid hydroxylase domain maps to 219–361 (FVLGMLFWTF…TKLWDYFFHT (143 aa)). Positions 234, 239, 257, 260, and 261 each coordinate Zn(2+). The next 2 membrane-spanning stretches (helical) occupy residues 268–288 (SRLV…YVFL) and 290–310 (LILP…GYVL). His-315, His-319, His-336, His-339, and His-340 together coordinate Zn(2+).

The protein belongs to the sterol desaturase family. SCS7 subfamily. Requires Zn(2+) as cofactor. In terms of tissue distribution, expressed in brain (at protein level). Detected in cerebellum and forebrain. Expression in the white matter is mainly restricted in oligodendrocytes. Expressed in stomach, kidney, skin and testis. Expressed in sebaceous gland.

The protein localises to the endoplasmic reticulum membrane. The protein resides in the microsome membrane. The catalysed reaction is a 1,2-saturated fatty acid + 2 Fe(II)-[cytochrome b5] + O2 + 2 H(+) = a (R)-2-hydroxy fatty acid + 2 Fe(III)-[cytochrome b5] + H2O. It carries out the reaction hexadecanoate + 2 Fe(II)-[cytochrome b5] + O2 + 2 H(+) = (R)-2-hydroxyhexadecanoate + 2 Fe(III)-[cytochrome b5] + H2O. The enzyme catalyses octadecanoate + 2 Fe(II)-[cytochrome b5] + O2 + 2 H(+) = (R)-2-hydroxyoctadecanoate + 2 Fe(III)-[cytochrome b5] + H2O. It catalyses the reaction docosanoate + 2 Fe(II)-[cytochrome b5] + O2 + 2 H(+) = 2-hydroxydocosanoate + 2 Fe(III)-[cytochrome b5] + H2O. The catalysed reaction is tetracosanoate + 2 Fe(II)-[cytochrome b5] + O2 + 2 H(+) = (R)-2-hydroxytetracosanoate + 2 Fe(III)-[cytochrome b5] + H2O. It participates in sphingolipid metabolism; galactosylceramide biosynthesis. It functions in the pathway lipid metabolism; fatty acid metabolism. In terms of biological role, catalyzes the hydroxylation of free fatty acids at the C-2 position to produce 2-hydroxy fatty acids, which are building blocks of sphingolipids and glycosphingolipids common in neural tissue and epidermis. FA2H is stereospecific for the production of (R)-2-hydroxy fatty acids. Plays an essential role in the synthesis of galactosphingolipids of the myelin sheath. Responsible for the synthesis of sphingolipids and glycosphingolipids involved in the formation of epidermal lamellar bodies critical for skin permeability barrier. Participates in the synthesis of glycosphingolipids and a fraction of type II wax diesters in sebaceous gland, specifically regulating hair follicle homeostasis. Involved in the synthesis of sphingolipids of plasma membrane rafts, controlling lipid raft mobility and trafficking of raft-associated proteins. The polypeptide is Fatty acid 2-hydroxylase (Mus musculus (Mouse)).